The primary structure comprises 519 residues: MGISSIIIILFIIVLLKKLIKKEDRIHRINKNIPGPKSKLLVGNLFDLKGQVHEKLKEWYEQYGSVYRIEFGSVSTVVLTEYATLKEAFVDNGEIFQSRFQRKSRTTCNKGLNLANSNGEYFNHLKKTLSNEITNQKMKKNEKIIKIQVGLLSEFFNEISGGGGGGSGGSGISKEPINNIIKMYSLNVMLSLLFNIHFPYNNNSYQDELMSTITRYFKSTGLPYPSDFIPILYPFLKNKPKEYFEDYESVKKLITRITNEYQLKHMTEISNKSTIEEIENYQPTNILESLLKQYRLNKIPYDGVIGCLMDLILAGSDTTGNTCLFSLVALVNNSNIQEKLFNEISNAFNDDDGDELNGANDISNSLLKLSYFSDRIKTPYLVAFIKEVKRYYPCAPLSVPHLLTEDCEIQGYKIAKGTQVIQNIYSTHLSQSFCSNPLEFSPERFLDSTNEPKIITFGIGQRKCPGENIFEIEIYIFLVYLIKKFKFSHPIDDNLQLNDRGQFGLSLQCPQLNIKVESR.

A helical transmembrane segment spans residues 1-21; it reads MGISSIIIILFIIVLLKKLIK. Cys464 serves as a coordination point for heme.

Belongs to the cytochrome P450 family. Heme serves as cofactor.

The protein resides in the membrane. The protein is Probable cytochrome P450 513D1 (cyp513D1) of Dictyostelium discoideum (Social amoeba).